Consider the following 649-residue polypeptide: Threonine--tRNA ligase (649 aa).

A TGS domain is found at 1 to 60 (MHVTLPDGKQLDLQAGATALDVARALGPRLAQDALAALVNGELMDLMTPLPEGAQVRLIT). The segment at 248–544 (DHRKLGRELE…LIEHYGGDFP (297 aa)) is catalytic. Positions 341, 392, and 521 each coordinate Zn(2+).

Belongs to the class-II aminoacyl-tRNA synthetase family. In terms of assembly, homodimer. Requires Zn(2+) as cofactor.

Its subcellular location is the cytoplasm. It catalyses the reaction tRNA(Thr) + L-threonine + ATP = L-threonyl-tRNA(Thr) + AMP + diphosphate + H(+). Functionally, catalyzes the attachment of threonine to tRNA(Thr) in a two-step reaction: L-threonine is first activated by ATP to form Thr-AMP and then transferred to the acceptor end of tRNA(Thr). Also edits incorrectly charged L-seryl-tRNA(Thr). This Deinococcus geothermalis (strain DSM 11300 / CIP 105573 / AG-3a) protein is Threonine--tRNA ligase.